We begin with the raw amino-acid sequence, 174 residues long: NADH-quinone oxidoreductase subunit I (174 aa).

4Fe-4S ferredoxin-type domains follow at residues 44–74 (LNRYPDGLEKCIGCELCAWACPADAIYVEGD) and 90–119 (RVYQINYLRCIGCGLCIEACPTRALTMTND). Cys54, Cys57, Cys60, Cys64, Cys99, Cys102, Cys105, and Cys109 together coordinate [4Fe-4S] cluster.

It belongs to the complex I 23 kDa subunit family. As to quaternary structure, NDH-1 is composed of 14 different subunits. Subunits NuoA, H, J, K, L, M, N constitute the membrane sector of the complex. [4Fe-4S] cluster is required as a cofactor.

Its subcellular location is the cell membrane. The enzyme catalyses a quinone + NADH + 5 H(+)(in) = a quinol + NAD(+) + 4 H(+)(out). Functionally, NDH-1 shuttles electrons from NADH, via FMN and iron-sulfur (Fe-S) centers, to quinones in the respiratory chain. The immediate electron acceptor for the enzyme in this species is believed to be menaquinone. Couples the redox reaction to proton translocation (for every two electrons transferred, four hydrogen ions are translocated across the cytoplasmic membrane), and thus conserves the redox energy in a proton gradient. This chain is NADH-quinone oxidoreductase subunit I, found in Mycobacterium sp. (strain JLS).